Consider the following 211-residue polypeptide: Outer surface protein C (211 aa).

The first 18 residues, 1-18 (MKKNTLSAILMTLFLFIS), serve as a signal peptide directing secretion. Residue Cys19 is the site of N-palmitoyl cysteine attachment. Cys19 carries the S-diacylglycerol cysteine lipid modification.

Belongs to the OspC lipoprotein family. In terms of assembly, homodimer. Interacts with tick I.ricinus salivary protein Iric-1, Iric-2 and Iric-3. Binds human (host) plasminogen.

It localises to the cell outer membrane. The protein localises to the cell surface. In terms of biological role, major immunodominant protein in mammalian hosts. Required for initial stages of mammalian infection. Inhibits macrophage-mediated phagocytosis of the bacteria. Binds human plasminogen; this probably confers an extracellular protease activity on the bacteria that allows it to traverse tissue. Interaction with tick I.ricinus salivary protein Salp15 protects the bacteria from antibody-mediated killing in vitro and in vivo. The chain is Outer surface protein C from Borreliella burgdorferi (Lyme disease spirochete).